A 189-amino-acid chain; its full sequence is Probable DNA-directed RNA polymerase subunit delta (189 aa).

In terms of domain architecture, HTH HARE-type spans Leu14–Trp81. 2 stretches are compositionally biased toward acidic residues: residues Glu90 to Glu100 and Glu118 to Glu189. The interval Glu90–Glu189 is disordered.

This sequence belongs to the RpoE family. RNAP is composed of a core of 2 alpha, a beta and a beta' subunits. The core is associated with a delta subunit and one of several sigma factors.

Functionally, participates in both the initiation and recycling phases of transcription. In the presence of the delta subunit, RNAP displays an increased specificity of transcription, a decreased affinity for nucleic acids, and an increased efficiency of RNA synthesis because of enhanced recycling. This Lactobacillus delbrueckii subsp. bulgaricus (strain ATCC BAA-365 / Lb-18) protein is Probable DNA-directed RNA polymerase subunit delta.